The chain runs to 937 residues: Putative diacylglycerol kinase K06A1.6 (937 aa).

Disordered stretches follow at residues 44-69 (PPRK…SSRA) and 106-145 (SNDS…STNN). Positions 116–129 (VSVSSESSWSSASD) are enriched in low complexity. The 138-residue stretch at 414-551 (GPSQPLLVFV…LDRWRIDVEP (138 aa)) folds into the DAGKc domain.

This sequence belongs to the eukaryotic diacylglycerol kinase family.

The enzyme catalyses a 1,2-diacyl-sn-glycerol + ATP = a 1,2-diacyl-sn-glycero-3-phosphate + ADP + H(+). This Caenorhabditis elegans protein is Putative diacylglycerol kinase K06A1.6 (dgk-5).